Reading from the N-terminus, the 429-residue chain is MKKQRNLRSMAAQAVEQVVEQGQSLSNILPPLQQKVSDKDKALLQELCFGVLRTLSQLDWLINKLMARPMTGKQRTVHYLIMVGLYQLLYTRIPPHAALAETVEGAIAIKRPQLKGLINGVLRQFQRQQEELLAEFNTSDARYLHPSWLLKRLQKAYPEQWQSIVEANNQRPPMWLRVNRTHHSRDSWLALLDEAGMKGFPHADYPDAVRLETPAPVHALPGFEDGWVTVQDASAQGCMTWLAPQNGEHILDLCAAPGGKTTHILEVAPEAQVVAVDIDEQRLSRVHDNLKRLGMKATVKQGDGRYPSQWCGEQQFDRILLDAPCSATGVIRRHPDIKWLRRDRDIPELAQLQSEILDAIWPHLKSGGTLVYATCSVLPEENSLQIKAFLQRTADAELCETGTPEQPGKQNLPGAEEGDGFFYAKLIKK.

Residues 254 to 260 (CAAPGGK), D277, D303, and D322 each bind S-adenosyl-L-methionine. C375 functions as the Nucleophile in the catalytic mechanism.

It belongs to the class I-like SAM-binding methyltransferase superfamily. RsmB/NOP family.

It is found in the cytoplasm. The enzyme catalyses cytidine(967) in 16S rRNA + S-adenosyl-L-methionine = 5-methylcytidine(967) in 16S rRNA + S-adenosyl-L-homocysteine + H(+). Its function is as follows. Specifically methylates the cytosine at position 967 (m5C967) of 16S rRNA. The protein is Ribosomal RNA small subunit methyltransferase B of Shigella sonnei (strain Ss046).